A 422-amino-acid polypeptide reads, in one-letter code: Histidine--tRNA ligase (422 aa).

The protein belongs to the class-II aminoacyl-tRNA synthetase family. Homodimer.

Its subcellular location is the cytoplasm. It carries out the reaction tRNA(His) + L-histidine + ATP = L-histidyl-tRNA(His) + AMP + diphosphate + H(+). This is Histidine--tRNA ligase from Vibrio atlanticus (strain LGP32) (Vibrio splendidus (strain Mel32)).